Consider the following 132-residue polypeptide: MNRVLCAPAAGAVRALRLIGRTSRSLHPLPGSRDRAHPAAEEQDDPDRPTEFSSSKANPRRWSVGHSMGKGHQRPWWKVLPLSCFLVALIIWCYLREESEADQWLRQVWGEVPEPSDRSEEPETPAAYRART.

A signal peptide spans 1–15 (MNRVLCAPAAGAVRA). The Mitochondrial matrix portion of the chain corresponds to 16-78 (LRLIGRTSRS…GKGHQRPWWK (63 aa)). The interval 24-73 (RSLHPLPGSRDRAHPAAEEQDDPDRPTEFSSSKANPRRWSVGHSMGKGHQ) is disordered. Residues 32–50 (SRDRAHPAAEEQDDPDRPT) show a composition bias toward basic and acidic residues. Residues 79 to 95 (VLPLSCFLVALIIWCYL) form a helical membrane-spanning segment. The Mitochondrial intermembrane segment spans residues 96 to 132 (REESEADQWLRQVWGEVPEPSDRSEEPETPAAYRART). Positions 110–132 (GEVPEPSDRSEEPETPAAYRART) are disordered.

The protein belongs to the UQCC4 family. In terms of assembly, forms a complex, named COMB/coordinator of mitochondrial CYTB biogenesis, composed of UQCC1, UQCC2, UQCC4, UQCC5 and UQCC6; stabilizes nascent cytochrome b/MT-CYB and promotes its membrane insertion. Forms a complex, named COMA, composed of UQCC1, UQCC2 and UQCC4; activates MT-CYB translation. Forms a complex, named COMC, composed of UQCC1, UQCC2; UQCC3 and UQCC4; mediates MT-CYB hemylation and association with the first nuclear-encoded complex III subunit UQCRQ. Complexes COMA and COMB are bound to the mitochondrion inner membrane by UQCC4.

The protein localises to the mitochondrion inner membrane. Required for the assembly and stability of the mitochondrial ubiquinol-cytochrome c reductase complex (complex III (CIII) or cytochrome b-c1 complex), a multisubunit transmembrane complex that is part of the mitochondrial electron transport chain (ETC) which drives oxidative phosphorylation. In Pongo abelii (Sumatran orangutan), this protein is Ubiquinol-cytochrome c reductase complex assembly factor 4 (UQCC4).